We begin with the raw amino-acid sequence, 299 residues long: tRNA pseudouridine synthase B (299 aa).

Residue Asp39 is the Nucleophile of the active site.

The protein belongs to the pseudouridine synthase TruB family. Type 1 subfamily.

It carries out the reaction uridine(55) in tRNA = pseudouridine(55) in tRNA. Functionally, responsible for synthesis of pseudouridine from uracil-55 in the psi GC loop of transfer RNAs. This is tRNA pseudouridine synthase B from Syntrophomonas wolfei subsp. wolfei (strain DSM 2245B / Goettingen).